The primary structure comprises 118 residues: MADDNVSFTDQGTAVGDEKKKGGSSAMLDMLGQLEKKETKKKGKKNKKSKKKAKKGKTKKVRKADKYESQNFLFRVEGAMFCAGIIVAMIMLFVIIIYGIITSSQTGGQFNRYMAPLF.

Polar residues predominate over residues 1-12; sequence MADDNVSFTDQG. A disordered region spans residues 1–63; that stretch reads MADDNVSFTD…KKGKTKKVRK (63 aa). A compositionally biased stretch (basic residues) spans 39–63; the sequence is TKKKGKKNKKSKKKAKKGKTKKVRK. Residues 81 to 101 traverse the membrane as a helical segment; it reads FCAGIIVAMIMLFVIIIYGII.

Its subcellular location is the membrane. This is an uncharacterized protein from Caenorhabditis elegans.